Consider the following 402-residue polypeptide: Beta-ketoacyl-[acyl-carrier-protein] synthase III B, chloroplastic (402 aa).

Active-site residues include C178, H328, and N358.

It belongs to the thiolase-like superfamily. FabH family.

The protein localises to the plastid. Its subcellular location is the chloroplast. It carries out the reaction malonyl-[ACP] + acetyl-CoA + H(+) = 3-oxobutanoyl-[ACP] + CO2 + CoA. The protein operates within lipid metabolism; fatty acid biosynthesis. Its function is as follows. Catalyzes the condensation reaction of fatty acid synthesis by the addition to an acyl acceptor of two carbons from malonyl-ACP. KAS III catalyzes the first condensation reaction which initiates fatty acid synthesis and may therefore play a role in governing the total rate of fatty acid production. Possesses both acetoacetyl-ACP synthase and acetyl transacylase activities. The chain is Beta-ketoacyl-[acyl-carrier-protein] synthase III B, chloroplastic (KAS3B) from Cuphea wrightii (Wright's waxweed).